A 355-amino-acid polypeptide reads, in one-letter code: Uroporphyrinogen decarboxylase (355 aa).

Substrate-binding positions include 27–31, Asp78, Tyr155, Ser210, and His328; that span reads RQAGR.

The protein belongs to the uroporphyrinogen decarboxylase family. In terms of assembly, homodimer.

The protein localises to the cytoplasm. It carries out the reaction uroporphyrinogen III + 4 H(+) = coproporphyrinogen III + 4 CO2. Its pathway is porphyrin-containing compound metabolism; protoporphyrin-IX biosynthesis; coproporphyrinogen-III from 5-aminolevulinate: step 4/4. Its function is as follows. Catalyzes the decarboxylation of four acetate groups of uroporphyrinogen-III to yield coproporphyrinogen-III. This is Uroporphyrinogen decarboxylase from Pseudomonas aeruginosa (strain LESB58).